Reading from the N-terminus, the 426-residue chain is Glutamate-1-semialdehyde 2,1-aminomutase (426 aa).

N6-(pyridoxal phosphate)lysine is present on lysine 265.

Belongs to the class-III pyridoxal-phosphate-dependent aminotransferase family. HemL subfamily. In terms of assembly, homodimer. Requires pyridoxal 5'-phosphate as cofactor.

It is found in the cytoplasm. It catalyses the reaction (S)-4-amino-5-oxopentanoate = 5-aminolevulinate. It participates in porphyrin-containing compound metabolism; protoporphyrin-IX biosynthesis; 5-aminolevulinate from L-glutamyl-tRNA(Glu): step 2/2. This Klebsiella pneumoniae subsp. pneumoniae (strain ATCC 700721 / MGH 78578) protein is Glutamate-1-semialdehyde 2,1-aminomutase.